A 217-amino-acid polypeptide reads, in one-letter code: Glycine betaine/carnitine/choline transport system permease protein OpuCB (217 aa).

In terms of domain architecture, ABC transmembrane type-1 spans Thr19–Leu198. A run of 6 helical transmembrane segments spans residues Leu23–Ala43, Gly52–Ile74, Ala84–Tyr101, Leu128–Tyr148, Ile150–Ile170, and Ile180–Val200.

This sequence belongs to the binding-protein-dependent transport system permease family. CysTW subfamily. As to quaternary structure, the complex is composed of two ATP-binding proteins (OpuCA), two transmembrane proteins (OpuCB and OpuCD) and a solute-binding protein (OpuCC).

It is found in the cell membrane. Functionally, involved in a high affinity multicomponent binding-protein-dependent transport system for glycine betaine, carnitine and choline; probably responsible for the translocation of the substrate across the membrane. The chain is Glycine betaine/carnitine/choline transport system permease protein OpuCB (opuCB) from Bacillus subtilis (strain 168).